The following is a 1062-amino-acid chain: Isoleucine--tRNA ligase (1062 aa).

The 'HIGH' region motif lies at 47 to 57; it reads PYTTGHIHLGT. The 'KMSKS' region signature appears at 591-595; the sequence is KMSKS. An ATP-binding site is contributed by Lys-594.

It belongs to the class-I aminoacyl-tRNA synthetase family. IleS type 2 subfamily. Monomer. Zn(2+) is required as a cofactor.

The protein resides in the cytoplasm. It carries out the reaction tRNA(Ile) + L-isoleucine + ATP = L-isoleucyl-tRNA(Ile) + AMP + diphosphate. Catalyzes the attachment of isoleucine to tRNA(Ile). As IleRS can inadvertently accommodate and process structurally similar amino acids such as valine, to avoid such errors it has two additional distinct tRNA(Ile)-dependent editing activities. One activity is designated as 'pretransfer' editing and involves the hydrolysis of activated Val-AMP. The other activity is designated 'posttransfer' editing and involves deacylation of mischarged Val-tRNA(Ile). In Methanospirillum hungatei JF-1 (strain ATCC 27890 / DSM 864 / NBRC 100397 / JF-1), this protein is Isoleucine--tRNA ligase.